The primary structure comprises 55 residues: Large ribosomal subunit protein bL33 (55 aa).

The span at 1-11 (MAKGGREKIKL) shows a compositional bias: basic and acidic residues. The interval 1 to 26 (MAKGGREKIKLESTAGTGHFYTTDKN) is disordered.

It belongs to the bacterial ribosomal protein bL33 family.

In Methylibium petroleiphilum (strain ATCC BAA-1232 / LMG 22953 / PM1), this protein is Large ribosomal subunit protein bL33.